Consider the following 300-residue polypeptide: HTH-type transcriptional regulator ArgP (300 aa).

The 57-residue stretch at 4–60 folds into the HTH lysR-type domain; the sequence is FDYKLLAALAAVVEQGGFERAAQALGLSQSAVSQRIKLLEARVGQPVLVRETPPHPT. The H-T-H motif DNA-binding region spans 21–40; the sequence is FERAAQALGLSQSAVSQRIK.

This sequence belongs to the LysR transcriptional regulatory family. In terms of assembly, homodimer.

Functionally, controls the transcription of genes involved in arginine and lysine metabolism. The sequence is that of HTH-type transcriptional regulator ArgP from Pseudomonas aeruginosa (strain UCBPP-PA14).